A 406-amino-acid chain; its full sequence is Trk system potassium uptake protein trkA homolog 1 (406 aa).

Positions 1 to 124 constitute an RCK N-terminal 1 domain; the sequence is MKAVIIGAGE…RAQVGVDLMI (124 aa). NAD(+)-binding positions include 7–11, Asp-29, 70–71, and Arg-101; these read GAGEV and TG. The 82-residue stretch at 144 to 225 folds into the RCK C-terminal domain; that stretch reads IDAEMFAEGK…MEDLESVFGS (82 aa). One can recognise an RCK N-terminal 2 domain in the interval 230 to 348; it reads RTRILLIGCG…FEMVGIDMAV (119 aa). 232-262 serves as a coordination point for NAD(+); sequence RILLIGCGIVGMYLAKLIDKEENADLRIIEH.

Its function is as follows. Part of a potassium transport system. The chain is Trk system potassium uptake protein trkA homolog 1 (trkA1) from Methanosarcina mazei (Methanosarcina frisia).